The chain runs to 776 residues: Ribosomal RNA large subunit methyltransferase K/L (776 aa).

The THUMP domain occupies 68–183 (DLYKICLWSR…DKQAELYLDL (116 aa)).

It belongs to the methyltransferase superfamily. RlmKL family.

The protein resides in the cytoplasm. The catalysed reaction is guanosine(2445) in 23S rRNA + S-adenosyl-L-methionine = N(2)-methylguanosine(2445) in 23S rRNA + S-adenosyl-L-homocysteine + H(+). It carries out the reaction guanosine(2069) in 23S rRNA + S-adenosyl-L-methionine = N(2)-methylguanosine(2069) in 23S rRNA + S-adenosyl-L-homocysteine + H(+). Functionally, specifically methylates the guanine in position 2445 (m2G2445) and the guanine in position 2069 (m7G2069) of 23S rRNA. The polypeptide is Ribosomal RNA large subunit methyltransferase K/L (Psychrobacter cryohalolentis (strain ATCC BAA-1226 / DSM 17306 / VKM B-2378 / K5)).